Here is a 113-residue protein sequence, read N- to C-terminus: Cell cycle protein GpsB (113 aa).

The stretch at 32–71 (LDNVIKDYESFTKDNQQLSDENERLRAKVDELTKQVAVGA) forms a coiled coil.

It belongs to the GpsB family. As to quaternary structure, forms polymers through the coiled coil domains. Interacts with PBP1, MreC and EzrA.

Its subcellular location is the cytoplasm. Divisome component that associates with the complex late in its assembly, after the Z-ring is formed, and is dependent on DivIC and PBP2B for its recruitment to the divisome. Together with EzrA, is a key component of the system that regulates PBP1 localization during cell cycle progression. Its main role could be the removal of PBP1 from the cell pole after pole maturation is completed. Also contributes to the recruitment of PBP1 to the division complex. Not essential for septum formation. This chain is Cell cycle protein GpsB, found in Lactiplantibacillus plantarum (strain ATCC BAA-793 / NCIMB 8826 / WCFS1) (Lactobacillus plantarum).